Here is a 690-residue protein sequence, read N- to C-terminus: Xylosyl- and glucuronyltransferase LARGE2 (690 aa).

The Cytoplasmic segment spans residues 1–8 (MLPRGRPR). Residues 9-29 (AMGAAVLLLLLLLVVGFFLFG) form a helical; Signal-anchor for type II membrane protein membrane-spanning segment. The Lumenal segment spans residues 30-690 (RDPDYGLGTT…TALQQARSRA (661 aa)). Residues asparagine 51 and asparagine 78 are each glycosylated (N-linked (GlcNAc...) asparagine). The segment at 68–343 (LHVAIVCAGY…FLGYDGKLLR (276 aa)) is xylosyltransferase activity. Residues aspartate 172 and aspartate 174 each contribute to the Mn(2+) site. Asparagine 202 carries N-linked (GlcNAc...) asparagine glycosylation. Residues 344–686 (RELFGCPNQF…LKYLTALQQA (343 aa)) are glucuronyltransferase activity. The Mn(2+) site is built by aspartate 492 and aspartate 494.

In the C-terminal section; belongs to the glycosyltransferase 49 family. The protein in the N-terminal section; belongs to the glycosyltransferase 8 family. It belongs to the glycosyltransferase 8 family. As to quaternary structure, interacts with B4GAT1. It depends on Mn(2+) as a cofactor. In terms of tissue distribution, highly expressed in the testis and kidney, but weakly expressed in the heart and brain. Expressed during embryogenesis from 7 dpc.

It is found in the golgi apparatus membrane. It catalyses the reaction 3-O-[beta-D-GlcA-(1-&gt;3)-beta-D-Xyl-(1-&gt;4)-Rib-ol-P-Rib-ol-P-3-beta-D-GalNAc-(1-&gt;3)-beta-D-GlcNAc-(1-&gt;4)-(O-6-P-alpha-D-Man)]-Thr-[protein] + UDP-alpha-D-xylose = 3-O-[alpha-D-Xyl-(1-&gt;3)-beta-D-GlcA-(1-&gt;4)-beta-D-Xyl-(1-&gt;4)-Rib-ol-P-Rib-ol-P-3-beta-D-GalNAc-(1-&gt;3)-beta-D-GlcNAc-(1-&gt;4)-(O-6-P-alpha-D-Man)]-Thr-[protein] + UDP + H(+). It carries out the reaction 3-O-{(1-&gt;[3)-alpha-D-Xyl-(1-&gt;3)-beta-D-GlcA-(1-&gt;](n)-4)-beta-D-Xyl-(1-&gt;4)-Rib-ol-P-Rib-ol-P-3-beta-D-GalNAc-(1-&gt;3)-beta-D-GlcNAc-(1-&gt;4)-O-6-P-alpha-D-Man}-L-Thr-[protein] + UDP-alpha-D-glucuronate = 3-O-{beta-D-GlcA-(1-&gt;[3)-alpha-D-Xyl-(1-&gt;3)-beta-D-GlcA-(1-&gt;](n)-4)-beta-D-Xyl-(1-&gt;4)-Rib-ol-P-Rib-ol-P-3-beta-D-GalNAc-(1-&gt;3)-beta-D-GlcNAc-(1-&gt;4)-O-6-P-alpha-D-Man}-L-Thr-[protein] + UDP + H(+). The catalysed reaction is 3-O-{beta-D-GlcA-(1-&gt;[3)-alpha-D-Xyl-(1-&gt;3)-beta-D-GlcA-(1-&gt;](n)-4)-beta-D-Xyl-(1-&gt;4)-Rib-ol-P-Rib-ol-P-3-beta-D-GalNAc-(1-&gt;3)-beta-D-GlcNAc-(1-&gt;4)-O-6-P-alpha-D-Man}-L-Thr-[protein] + UDP-alpha-D-xylose = 3-O-{(1-&gt;[3)-alpha-D-Xyl-(1-&gt;3)-beta-D-GlcA-(1-&gt;](n+1)-4)-beta-D-Xyl-(1-&gt;4)-Rib-ol-P-Rib-ol-P-3-beta-D-GalNAc-(1-&gt;3)-beta-D-GlcNAc-(1-&gt;4)-O-6-P-alpha-D-Man}-L-Thr-[protein] + UDP + H(+). The protein operates within protein modification; protein glycosylation. Its function is as follows. Bifunctional glycosyltransferase with both alpha-1,3-xylosyltransferase and beta-1,3-glucuronyltransferase activities involved in the maturation of alpha-dystroglycan (DAG1) by glycosylation leading to DAG1 binding to laminin G-like domain-containing extracellular proteins with high affinity and in a phosphorylated-O-mannosyl trisaccharide dependent manner. Elongates the glucuronyl-beta-1,4-xylose-beta disaccharide primer structure by adding repeating units [-3-Xylose-alpha-1,3-GlcA-beta-1-] to produce a heteropolysaccharide. Supports the maturation of DAG1 more effectively than LARGE1. In addition, can modify both heparan sulfate (HS)- and chondroitin/dermatan sulfate (CS/DS)-proteoglycans (PGs), namely GPC4, with a glycosaminoglycan (GAG)-like polysaccharide composed of xylose and glucuronic acid to confer laminin binding. This is Xylosyl- and glucuronyltransferase LARGE2 from Mus musculus (Mouse).